Here is a 79-residue protein sequence, read N- to C-terminus: RNA-binding protein Hfq (79 aa).

The Sm domain occupies 10–69 (DPFLNALRKEHVPVSIYLVNGIKLQGNIESFDQYVVLLRNTVTQMVYKHAISTVVPARPV).

It belongs to the Hfq family. In terms of assembly, homohexamer.

In terms of biological role, RNA chaperone that binds small regulatory RNA (sRNAs) and mRNAs to facilitate mRNA translational regulation in response to envelope stress, environmental stress and changes in metabolite concentrations. Also binds with high specificity to tRNAs. The chain is RNA-binding protein Hfq from Burkholderia mallei (strain ATCC 23344).